The chain runs to 522 residues: Glucose-1-phosphate adenylyltransferase large subunit 1, chloroplastic (522 aa).

A chloroplast-targeting transit peptide spans 1–54 (MVVSADCRISLSAPSCIRSSSTGLTRHIKLGSFCNGELMGKKLNLSQLPNIRLR). Ser-428 bears the Phosphoserine mark.

It belongs to the bacterial/plant glucose-1-phosphate adenylyltransferase family. Heterotetramer. In terms of tissue distribution, leaves.

It localises to the plastid. The protein localises to the chloroplast. The catalysed reaction is alpha-D-glucose 1-phosphate + ATP + H(+) = ADP-alpha-D-glucose + diphosphate. It functions in the pathway glycan biosynthesis; starch biosynthesis. Activated by 3'phosphoglycerate, inhibited by orthophosphate. Allosteric regulation. Functionally, this protein plays a role in synthesis of starch. It catalyzes the synthesis of the activated glycosyl donor, ADP-glucose from Glc-1-P and ATP. The polypeptide is Glucose-1-phosphate adenylyltransferase large subunit 1, chloroplastic (ADG2) (Arabidopsis thaliana (Mouse-ear cress)).